The chain runs to 386 residues: MVFFTCNACGESVKKIQVEKHVSICRNCECLSCIDCGKDFWGDDYKNHVKCISEDQKYGGKGYEAKTHKGDVKQQAWIQKINELIKKPNVSPKVRELLQQISAFDNVPRKKAKFQNWMRNSLKVHSDSVLEQVWNIFSEAASSEQDQQPPSHMAKPNTEVPTKVPSTKTNGTTEEQTEAKKNKRERKEERQKSRKKEKKELKLENHQENLKGQKPKKRKKGQEAGHEAGGEDAAEANGAPEKKRARDAQASEEGADRNGGPAEDADEGPTKTAAGKRKRQKHSEVESDNKKKKMKLPGQPEEGEPEDHEAPSKGKFNWKGTIKAVLKQAPDNEISVKKLKKKVIAQYHAVMSDHHTSEEELLAIFNKKISRNPTFKVLKDKVKLLK.

2 consecutive C2HC LYAR-type zinc fingers follow at residues Met1–Arg26 and Cys28–Ile52. The Zn(2+) site is built by Cys6 and Cys9. A Glycyl lysine isopeptide (Lys-Gly) (interchain with G-Cter in SUMO2) cross-link involves residue Lys14. Zn(2+)-binding residues include His21, Cys25, Cys33, Cys36, His48, and Cys51. 2 stretches are compositionally biased toward polar residues: residues Ala141–Pro150 and Val164–Glu174. Residues Ala141 to Phe316 are disordered. A coiled-coil region spans residues Thr172 to Lys214. 3 stretches are compositionally biased toward basic and acidic residues: residues Thr177–Gln191, Lys198–Lys211, and Pro240–Gln249. A Glycyl lysine isopeptide (Lys-Gly) (interchain with G-Cter in SUMO2) cross-link involves residue Lys202.

In terms of assembly, interacts with PRMT5; this interaction is direct. Interacts with GNL2 and RPL23A. Interacts with nucleolin/NCL; this interaction is direct. Interacts with phosphorylated IRF3; this interaction impairs IRF3 DNA-binding activity. Expressed in testis (at protein level).

It localises to the nucleus. The protein resides in the nucleolus. It is found in the cytoplasm. The protein localises to the cell projection. Its subcellular location is the cilium. It localises to the photoreceptor outer segment. Its function is as follows. Plays a role in the maintenance of the appropriate processing of 47S/45S pre-rRNA to 32S/30S pre-rRNAs and their subsequent processing to produce 18S and 28S rRNAs. Also acts at the level of transcription regulation. Along with PRMT5, binds embryonic globin promoter. Represses the expression of embryonic globin Hbb-y gene. In neuroblastoma cells, may also repress the expression of oxidative stress genes, including CHAC1, HMOX1, SLC7A11, ULBP1 and that encoding the small nucleolar RNA SNORD41. Preferentially binds to a DNA motif containing 5'-GGTTAT-3'. Negatively regulates the antiviral innate immune response by targeting IRF3 and impairing its DNA-binding activity. In addition, inhibits NF-kappa-B-mediated expression of pro-inflammatory cytokines. Stimulates phagocytosis of photoreceptor outer segments by retinal pigment epithelial cells. Prevents NCL self-cleavage, maintaining a normal steady-state level of NCL protein in undifferentiated embryonic stem cells (ESCs), which in turn is essential for ESC self-renewal. In Rattus norvegicus (Rat), this protein is Cell growth-regulating nucleolar protein (Lyar).